Reading from the N-terminus, the 369-residue chain is Anhydro-N-acetylmuramic acid kinase (369 aa).

Position 12–19 (12–19 (GTSMDGVD)) interacts with ATP.

This sequence belongs to the anhydro-N-acetylmuramic acid kinase family.

The catalysed reaction is 1,6-anhydro-N-acetyl-beta-muramate + ATP + H2O = N-acetyl-D-muramate 6-phosphate + ADP + H(+). The protein operates within amino-sugar metabolism; 1,6-anhydro-N-acetylmuramate degradation. Its pathway is cell wall biogenesis; peptidoglycan recycling. Its function is as follows. Catalyzes the specific phosphorylation of 1,6-anhydro-N-acetylmuramic acid (anhMurNAc) with the simultaneous cleavage of the 1,6-anhydro ring, generating MurNAc-6-P. Is required for the utilization of anhMurNAc either imported from the medium or derived from its own cell wall murein, and thus plays a role in cell wall recycling. This is Anhydro-N-acetylmuramic acid kinase from Shewanella oneidensis (strain ATCC 700550 / JCM 31522 / CIP 106686 / LMG 19005 / NCIMB 14063 / MR-1).